The chain runs to 284 residues: TM2 domain-containing protein almondex (284 aa).

The N-terminal stretch at 1-32 (MRLQRQCIVVNMRSAIVLIMIFVLTGIRNSET) is a signal peptide. A disordered region spans residues 33-63 (ASGGNQMDLSDSKGDHKDNSNASNGNGNAND). At 33-225 (ASGGNQMDLS…NWTQGYRWST (193 aa)) the chain is on the extracellular side. The segment covering 42–51 (SDSKGDHKDN) has biased composition (basic and acidic residues). The segment covering 52–63 (SNASNGNGNAND) has biased composition (low complexity). N-linked (GlcNAc...) asparagine glycosylation is found at N53, N89, N141, N194, N206, and N216. In terms of domain architecture, TM2 spans 220-267 (GYRWSTALLISLTLGGFGADRFYLGHWQEGIGKLFSFGGLGVWTIIDV). A helical transmembrane segment spans residues 226-246 (ALLISLTLGGFGADRFYLGHW). The Cytoplasmic portion of the chain corresponds to 247–249 (QEG). Residues 250-270 (IGKLFSFGGLGVWTIIDVLLI) form a helical membrane-spanning segment. At 271-284 (SMHYLGPADGSLYI) the chain is on the extracellular side.

This sequence belongs to the TM2 family. In terms of tissue distribution, expressed in female ovary, mainly in nurse cells (at protein level). Expressed in the brain at low levels (at protein level).

The protein resides in the membrane. It is found in the vesicle. Positive regulator of Notch signaling during lateral inhibition and boundary formation. Interacts with Notch signaling at the membrane, at the level of gamma-secretase-mediated S3 cleavage. May regulate Notch signaling by regulating the subcellular localization of N/Notch in a context dependent manner. Maternal neurogenic factor involved in Notch signaling-dependent mesectodermal and neuroectodermal specification during early embryogenesis. Functions cooperatively with bisc/TM2D1 and amrt/TM2D2. Required for maintenance of neuronal function. Involved in imaginal specification of eyes and wings. This Drosophila melanogaster (Fruit fly) protein is TM2 domain-containing protein almondex.